Here is a 699-residue protein sequence, read N- to C-terminus: Glycine--tRNA ligase beta subunit (699 aa).

The protein belongs to the class-II aminoacyl-tRNA synthetase family. Tetramer of two alpha and two beta subunits.

It localises to the cytoplasm. The enzyme catalyses tRNA(Gly) + glycine + ATP = glycyl-tRNA(Gly) + AMP + diphosphate. The chain is Glycine--tRNA ligase beta subunit from Baumannia cicadellinicola subsp. Homalodisca coagulata.